A 554-amino-acid polypeptide reads, in one-letter code: HMG box-containing protein 4 (554 aa).

3 disordered regions span residues R14–Y34, Q47–Q368, and H418–K468. Over residues T117–H127 the composition is skewed to polar residues. Residues T221 to S230 are compositionally biased toward basic and acidic residues. Polar residues predominate over residues P242–G255. Positions M272–K300 are enriched in basic residues. Pro residues predominate over residues L317 to P335. Over residues H342–K358 the composition is skewed to basic and acidic residues. Positions K360–V428 form a DNA-binding region, HMG box. The segment covering S434–P466 has biased composition (low complexity).

As to quaternary structure, interacts with nlk.2.

It is found in the nucleus. In terms of biological role, negatively regulates Wnt/beta-catenin signaling during development. The chain is HMG box-containing protein 4 (hmgxb4) from Xenopus tropicalis (Western clawed frog).